The chain runs to 398 residues: Phosphoglycerate kinase (398 aa).

Residues 23–25, Arg38, 61–64, Arg120, and Arg153 contribute to the substrate site; these read DLN and HFGR. ATP contacts are provided by residues Lys203, Glu325, and 355-358; that span reads GGDT.

This sequence belongs to the phosphoglycerate kinase family. In terms of assembly, monomer.

It is found in the cytoplasm. It catalyses the reaction (2R)-3-phosphoglycerate + ATP = (2R)-3-phospho-glyceroyl phosphate + ADP. Its pathway is carbohydrate degradation; glycolysis; pyruvate from D-glyceraldehyde 3-phosphate: step 2/5. The sequence is that of Phosphoglycerate kinase from Mesorhizobium japonicum (strain LMG 29417 / CECT 9101 / MAFF 303099) (Mesorhizobium loti (strain MAFF 303099)).